Here is a 297-residue protein sequence, read N- to C-terminus: Lysenin (297 aa).

The segment at 10–33 is N-terminal cap domain; it reads EQIEVDVVAVWKEGYVYENRGSTS. The segment at 34-107 is beta-hairpin domain; sequence VDQKITITKG…SKVIEHTITI (74 aa). Residues 108 to 156 form an N-terminal cap domain region; that stretch reads PPTSKFTRWQLNADVGGADIEYMYLIDEVTPIGGTQSIPQVITSRAKII. Positions 157 to 297 are C-terminal receptor-binding domain; that stretch reads VGRQIILGKT…EDKWILEVVG (141 aa). Positions 185, 227, 233, and 282 each coordinate an N-(acyl)-sphingosylphosphocholine. Residues C272 and C283 are joined by a disulfide bond.

Belongs to the lysenin family. In terms of assembly, binds to sphingomyelin as a monomer by using its C-terminal domain. Forms a nonamer when sphingomyelin/lysenin ratio is lower than ca 500. Oligomerization, but not binding, is influenced by the fluidity of sphingomyelin. Expressed by coelomocytes.

The protein localises to the secreted. It is found in the target cell membrane. Pore-forming toxin that defensively acts against parasitic microorganisms by forming pores in sphingomyelin-containing membranes. Has hemolytic activity and is also cytotoxic to spermatozoa of some species of invertebrates and many species of vertebrates and to amphibian larvae, guinea pig polymorphonuclear leukocytes, chicken fibroblasts, normal spleen cells and various tumor cells. Is lethal for various species of reptiles, amphibian, birds and mammals. Induces smooth muscle contraction. It binds sphingomyelin and induces hemolysis in the same manner as lysenin-related protein 2, and is 10-fold more effective than lysenin-related protein 1. The sequence is that of Lysenin from Eisenia fetida (Red wiggler worm).